The chain runs to 109 residues: Protein phosphatase 1 regulatory subunit 1C (109 aa).

The tract at residues 25-109 is disordered; sequence AEQIRKRRPT…TNEREEQRDH (85 aa). The span at 45-54 shows a compositional bias: basic and acidic residues; sequence NPPEIDDKRG. A compositionally biased stretch (polar residues) spans 55-75; that stretch reads PNTQGELQNASPKQRKQSVYT. Positions 100-109 are enriched in basic and acidic residues; the sequence is TNEREEQRDH.

It belongs to the protein phosphatase inhibitor 1 family.

It is found in the cytoplasm. Functionally, may increase cell susceptibility to TNF-induced apoptosis. The chain is Protein phosphatase 1 regulatory subunit 1C (PPP1R1C) from Homo sapiens (Human).